The sequence spans 513 residues: Ribonuclease Y (513 aa).

A helical transmembrane segment spans residues 4 to 24 (NTAIIIAITTGFVAFIGGYFL). Positions 203–266 (TVAVIPLPNE…ETARMALEKL (64 aa)) constitute a KH domain. Residues 329–422 (VLKHSVEVAY…IQAADAISAA (94 aa)) form the HD domain.

The protein belongs to the RNase Y family.

The protein resides in the cell membrane. Its function is as follows. Endoribonuclease that initiates mRNA decay. The polypeptide is Ribonuclease Y (Desulforudis audaxviator (strain MP104C)).